The following is a 264-amino-acid chain: Phosphatidylglycerol--prolipoprotein diacylglyceryl transferase (264 aa).

Transmembrane regions (helical) follow at residues 14–34, 60–80, 98–118, 128–148, 176–196, 203–223, and 240–260; these read IIFSIGPIALRWYGLMYLIGF, LIYTCFWGVILGGRIGDVFFY, GGMSFHGGLIGVIVAMIWVSF, ADFIAPLIPFGLGMGRIGNFI, SQLYEFFLEGVVLFFILNWFI, GSVAGLFLIGYGVFRFLVEYV, and GQLLSLPMIIGGLAIMIWAYS. Arg143 is a binding site for a 1,2-diacyl-sn-glycero-3-phospho-(1'-sn-glycerol).

The protein belongs to the Lgt family.

The protein resides in the cell inner membrane. It catalyses the reaction L-cysteinyl-[prolipoprotein] + a 1,2-diacyl-sn-glycero-3-phospho-(1'-sn-glycerol) = an S-1,2-diacyl-sn-glyceryl-L-cysteinyl-[prolipoprotein] + sn-glycerol 1-phosphate + H(+). It functions in the pathway protein modification; lipoprotein biosynthesis (diacylglyceryl transfer). Functionally, catalyzes the transfer of the diacylglyceryl group from phosphatidylglycerol to the sulfhydryl group of the N-terminal cysteine of a prolipoprotein, the first step in the formation of mature lipoproteins. In Actinobacillus pleuropneumoniae serotype 7 (strain AP76), this protein is Phosphatidylglycerol--prolipoprotein diacylglyceryl transferase.